An 894-amino-acid chain; its full sequence is Bifunctional glutamine synthetase adenylyltransferase/adenylyl-removing enzyme (894 aa).

The tract at residues Met1–Ser410 is adenylyl removase. The adenylyl transferase stretch occupies residues Ser415–Ser894.

This sequence belongs to the GlnE family. It depends on Mg(2+) as a cofactor.

The enzyme catalyses [glutamine synthetase]-O(4)-(5'-adenylyl)-L-tyrosine + phosphate = [glutamine synthetase]-L-tyrosine + ADP. The catalysed reaction is [glutamine synthetase]-L-tyrosine + ATP = [glutamine synthetase]-O(4)-(5'-adenylyl)-L-tyrosine + diphosphate. Involved in the regulation of glutamine synthetase GlnA, a key enzyme in the process to assimilate ammonia. When cellular nitrogen levels are high, the C-terminal adenylyl transferase (AT) inactivates GlnA by covalent transfer of an adenylyl group from ATP to specific tyrosine residue of GlnA, thus reducing its activity. Conversely, when nitrogen levels are low, the N-terminal adenylyl removase (AR) activates GlnA by removing the adenylyl group by phosphorolysis, increasing its activity. The regulatory region of GlnE binds the signal transduction protein PII (GlnB) which indicates the nitrogen status of the cell. The sequence is that of Bifunctional glutamine synthetase adenylyltransferase/adenylyl-removing enzyme from Chromobacterium violaceum (strain ATCC 12472 / DSM 30191 / JCM 1249 / CCUG 213 / NBRC 12614 / NCIMB 9131 / NCTC 9757 / MK).